Consider the following 283-residue polypeptide: NFU1 iron-sulfur cluster scaffold homolog, mitochondrial (283 aa).

Residues 1–30 (MSKFLSQAALNTLRNTRLGSRQLVRSFAGI) constitute a mitochondrion transit peptide. The segment at 182–250 (IKELLDTRIR…IPEVESVEQV (69 aa)) is nifU. Residues C219 and C222 each contribute to the [4Fe-4S] cluster site.

The protein belongs to the NifU family.

The protein localises to the mitochondrion. Molecular scaffold for [Fe-S] cluster assembly of mitochondrial iron-sulfur proteins. The sequence is that of NFU1 iron-sulfur cluster scaffold homolog, mitochondrial from Drosophila erecta (Fruit fly).